A 160-amino-acid chain; its full sequence is Small ribosomal subunit protein uS7 (160 aa).

It belongs to the universal ribosomal protein uS7 family. In terms of assembly, part of the 30S ribosomal subunit. Contacts proteins S9 and S11.

In terms of biological role, one of the primary rRNA binding proteins, it binds directly to 16S rRNA where it nucleates assembly of the head domain of the 30S subunit. Is located at the subunit interface close to the decoding center, probably blocks exit of the E-site tRNA. This chain is Small ribosomal subunit protein uS7, found in Rickettsia massiliae (strain Mtu5).